Here is a 512-residue protein sequence, read N- to C-terminus: Gasdermin-E (512 aa).

The segment at 1–56 (MFAKATRNFLKEVDAGGDLISVSHLNDSDKLQLLSLVTKKKRYWCWQRPKYQILSA) is membrane targeting domain. Cys-45 is modified (S-(2-succinyl)cysteine). Residue Lys-120 forms a Glycyl lysine isopeptide (Lys-Gly) (interchain with G-Cter in ubiquitin) linkage. Cys-156, Cys-168, and Cys-180 each carry S-(2-succinyl)cysteine. Lys-189 participates in a covalent cross-link: Glycyl lysine isopeptide (Lys-Gly) (interchain with G-Cter in ubiquitin). 3 positions are modified to S-(2-succinyl)cysteine: Cys-235, Cys-411, and Cys-420.

It belongs to the gasdermin family. Homooligomer; homooligomeric ring-shaped pore complex containing 27-28 subunits when inserted in the membrane. Post-translationally, cleavage at Asp-270 by CASP3 (mature and uncleaved precursor forms) or granzyme B (GZMB) relieves autoinhibition and is sufficient to initiate pyroptosis. Succination by the Krebs cycle intermediate fumarate, which leads to S-(2-succinyl)cysteine residues, inhibits processing by caspases, and ability to initiate pyroptosis. Succination modification is catalyzed by a non-enzymatic reaction caused by an accumulation of fumarate. In terms of processing, ubiquitinated on Lys-120 and Lys-189 via 'Lys-48'-linked polyubiquitin chains, leading to proteasomal degradation. Deubiquitinated by USP48, leading to increased stability. Post-translationally, palmitoylated. Expressed in spleen, kidney, large and small intestine, testicle, stomach and by CD4(+)CD(8+) T cells in thymus. Expressed by macrophages.

It is found in the cell membrane. Its subcellular location is the cytoplasm. The protein localises to the cytosol. The full-length protein before cleavage is inactive: intramolecular interactions between N- and C-terminal domains mediate autoinhibition in the absence of activation signal. The intrinsic pyroptosis-inducing activity is carried by the released N-terminal moiety (Gasdermin-E, N-terminal) following cleavage by CASP3 or granzyme B (GZMB). Activated by NLRP1 in the absence of GSDMD expression: NLRP1 cleaves and activates CASP8, promoting downstream activation of CASP3 and subsequent activation of GSDME. Its function is as follows. Precursor of a pore-forming protein that converts non-inflammatory apoptosis to pyroptosis. This form constitutes the precursor of the pore-forming protein: upon cleavage, the released N-terminal moiety (Gasdermin-E, N-terminal) binds to membranes and forms pores, triggering pyroptosis. In terms of biological role, pore-forming protein produced by cleavage by CASP3 or granzyme B (GZMB), which converts non-inflammatory apoptosis to pyroptosis or promotes granzyme-mediated pyroptosis, respectively. After cleavage, moves to the plasma membrane, homooligomerizes within the membrane and forms pores of 10-15 nanometers (nm) of inner diameter, allowing the release of mature interleukins (IL1B and IL16) and triggering pyroptosis. Binds to inner leaflet lipids, bisphosphorylated phosphatidylinositols, such as phosphatidylinositol (4,5)-bisphosphate. Cleavage by CASP3 switches CASP3-mediated apoptosis induced by TNF or danger signals, such as chemotherapy drugs, to pyroptosis. Mediates secondary necrosis downstream of the mitochondrial apoptotic pathway and CASP3 activation as well as in response to viral agents. Exhibits bactericidal activity. Cleavage by GZMB promotes tumor suppressor activity by triggering robust anti-tumor immunity. Suppresses tumors by mediating granzyme-mediated pyroptosis in target cells of natural killer (NK) cells: cleavage by granzyme B (GZMB), delivered to target cells from NK-cells, triggers pyroptosis of tumor cells and tumor suppression. May play a role in the p53/TP53-regulated cellular response to DNA damage. This Mus musculus (Mouse) protein is Gasdermin-E.